We begin with the raw amino-acid sequence, 176 residues long: Glutathione-regulated potassium-efflux system ancillary protein KefF (176 aa).

Residues H8, 14 to 17 (SHAN), 65 to 68 (MQWY), and 105 to 108 (TTGG) each bind FMN.

This sequence belongs to the NAD(P)H dehydrogenase (quinone) family. KefF subfamily. As to quaternary structure, homodimer. Interacts with KefC. It depends on FMN as a cofactor.

The protein localises to the cell inner membrane. The enzyme catalyses a quinone + NADH + H(+) = a quinol + NAD(+). It catalyses the reaction a quinone + NADPH + H(+) = a quinol + NADP(+). Its function is as follows. Regulatory subunit of a potassium efflux system that confers protection against electrophiles. Required for full activity of KefC. Shows redox enzymatic activity, but this enzymatic activity is not required for activation of KefC. The sequence is that of Glutathione-regulated potassium-efflux system ancillary protein KefF from Salmonella dublin (strain CT_02021853).